The sequence spans 344 residues: Phosphoribosylformylglycinamidine cyclo-ligase (344 aa).

The protein belongs to the AIR synthase family.

Its subcellular location is the cytoplasm. The enzyme catalyses 2-formamido-N(1)-(5-O-phospho-beta-D-ribosyl)acetamidine + ATP = 5-amino-1-(5-phospho-beta-D-ribosyl)imidazole + ADP + phosphate + H(+). Its pathway is purine metabolism; IMP biosynthesis via de novo pathway; 5-amino-1-(5-phospho-D-ribosyl)imidazole from N(2)-formyl-N(1)-(5-phospho-D-ribosyl)glycinamide: step 2/2. In Exiguobacterium sp. (strain ATCC BAA-1283 / AT1b), this protein is Phosphoribosylformylglycinamidine cyclo-ligase.